Consider the following 75-residue polypeptide: Exodeoxyribonuclease 7 small subunit (75 aa).

The protein belongs to the XseB family. Heterooligomer composed of large and small subunits.

The protein resides in the cytoplasm. The enzyme catalyses Exonucleolytic cleavage in either 5'- to 3'- or 3'- to 5'-direction to yield nucleoside 5'-phosphates.. Bidirectionally degrades single-stranded DNA into large acid-insoluble oligonucleotides, which are then degraded further into small acid-soluble oligonucleotides. This is Exodeoxyribonuclease 7 small subunit from Pelobacter propionicus (strain DSM 2379 / NBRC 103807 / OttBd1).